The following is a 397-amino-acid chain: Phosphoglycerate kinase (397 aa).

Residues 21–23 (DFN), Arg37, 60–63 (HLGR), Arg119, and Arg152 each bind substrate. Residues Lys202, Gly294, Glu325, and 351-354 (GGDS) each bind ATP.

It belongs to the phosphoglycerate kinase family. Monomer.

The protein localises to the cytoplasm. The enzyme catalyses (2R)-3-phosphoglycerate + ATP = (2R)-3-phospho-glyceroyl phosphate + ADP. It functions in the pathway carbohydrate degradation; glycolysis; pyruvate from D-glyceraldehyde 3-phosphate: step 2/5. In Pseudothermotoga lettingae (strain ATCC BAA-301 / DSM 14385 / NBRC 107922 / TMO) (Thermotoga lettingae), this protein is Phosphoglycerate kinase.